The sequence spans 211 residues: Stromal cell-derived factor 2 (211 aa).

The N-terminal stretch at M1–S18 is a signal peptide. MIR domains follow at residues L21–K75, G83–N138, and G139–G193.

It localises to the secreted. The protein is Stromal cell-derived factor 2 (SDF2) of Bos taurus (Bovine).